The chain runs to 492 residues: Transcript termination protein A18 (492 aa).

Residues 100-256 (MIELKRPLYI…NSIINIAKLS (157 aa)) form the Helicase ATP-binding domain. Residue 113–120 (LACGFGKT) coordinates ATP. A DESH box motif is present at residues 206-209 (DESH).

This sequence belongs to the helicase family. Poxviruses subfamily. As to quaternary structure, interacts with G2. Might be part of a transcription complex composed at least of G2, A18, and H5.

The protein resides in the virion. In terms of biological role, DNA helicase which seems to act as a postreplicative transcription termination factor. Involved in ATP-dependent release of nascent RNA. Forms a stable complex with single-stranded DNA, and to a lesser extent RNA. This Bos taurus (Bovine) protein is Transcript termination protein A18.